The sequence spans 96 residues: RNA-binding protein Hfq (96 aa).

The Sm domain occupies 9–68 (DPFLNALRRERVPVSIYLVNGIKLQGQIESFDQFVILLKNTVSQMVYKHAISTVVPSRPV). The segment at 64–96 (PSRPVSHHSNTGTNQAGTNYSGGNATQQDDVAE) is disordered. Over residues 70-96 (HHSNTGTNQAGTNYSGGNATQQDDVAE) the composition is skewed to polar residues.

It belongs to the Hfq family. In terms of assembly, homohexamer.

In terms of biological role, RNA chaperone that binds small regulatory RNA (sRNAs) and mRNAs to facilitate mRNA translational regulation in response to envelope stress, environmental stress and changes in metabolite concentrations. Also binds with high specificity to tRNAs. This is RNA-binding protein Hfq from Proteus mirabilis (strain HI4320).